An 898-amino-acid polypeptide reads, in one-letter code: Zinc finger protein 574 (898 aa).

3 consecutive C2H2-type zinc fingers follow at residues 16-38 (YVCS…QNSH), 76-98 (YQCL…QELH), and 126-148 (YECV…RQTH). At Ser164 the chain carries Phosphoserine. The segment at 213 to 235 (YKCSECSQLFQMPADFLEHQATH) adopts a C2H2-type 4 zinc-finger fold. A disordered region spans residues 243 to 305 (AEEPATQQET…PRRSSSGESG (63 aa)). Residues 273–290 (HSYELRNELRNGEAMGRD) show a composition bias toward basic and acidic residues. Ser301 is subject to Phosphoserine. 4 consecutive C2H2-type zinc fingers follow at residues 310 to 332 (LFCS…LRSH), 337 to 359 (FKCP…LGDH), 365 to 387 (FLCV…RRAH), and 393 to 414 (HSCP…RRTH). Positions 417-460 (GGVPLPTTPVPPEEPAISFPEPAPAETGELEAPELPVSEESSAE) are disordered. 6 C2H2-type zinc fingers span residues 467 to 490 (YRCL…RFVH), 496 to 518 (HKCS…LRTH), 524 to 546 (FPCP…RLTH), 552 to 574 (YRCG…RLVH), 580 to 602 (YRCQ…RYHH), and 608 to 631 (YKCR…LVVH). The C2H2-type 15; degenerate zinc-finger motif lies at 637–660 (HRCPSCGAAFPSSLRLREHRCAAA). The C2H2-type 16 zinc-finger motif lies at 668-690 (FECGTCGKKVGSAARLQAHEAAH). The interval 691 to 735 (AAAGPGEVLAKEPPAPRAARATRTPVAPSPTALGGTTSAAPAAPA) is disordered. Residues 707–734 (RAARATRTPVAPSPTALGGTTSAAPAAP) show a composition bias toward low complexity. Ser719 is modified (phosphoserine). Position 726 is a phosphothreonine (Thr726). C2H2-type zinc fingers lie at residues 740 to 762 (LECS…RRIH), 768 to 790 (YPCP…RRLH), 796 to 818 (FACE…RRIH), and 824 to 846 (YSCP…RKTH). Arg834 carries the post-translational modification Asymmetric dimethylarginine.

This sequence belongs to the krueppel C2H2-type zinc-finger protein family.

It is found in the nucleus. Functionally, may be involved in transcriptional regulation. This chain is Zinc finger protein 574 (Znf574), found in Rattus norvegicus (Rat).